A 682-amino-acid chain; its full sequence is Serine/threonine-protein kinase PAK 6 (682 aa).

4 disordered regions span residues Met-1 to Glu-30, Ser-132 to Pro-170, Leu-200 to Ser-256, and Pro-270 to Leu-367. A CRIB domain is found at Ile-12 to Ser-25. The interval Phe-26 to Leu-407 is linker. Polar residues-rich tracts occupy residues Pro-270–Lys-279 and Lys-297–Leu-334. A Protein kinase domain is found at Leu-408–Leu-659. ATP contacts are provided by residues Ile-414 to Val-422 and Lys-437. Asp-527 acts as the Proton acceptor in catalysis. Ser-561 carries the post-translational modification Phosphoserine; by autocatalysis.

Belongs to the protein kinase superfamily. STE Ser/Thr protein kinase family. STE20 subfamily. As to quaternary structure, interacts tightly with GTP-bound but not GDP-bound CDC42/p21 and RAC1. Interacts with the androgen receptor AR. Interacts with IQGAP1 and PPM1B. Post-translationally, autophosphorylated. Phosphorylated by MAP2K6/MAPKK6, leading to PAK6 activation.

The protein resides in the cytoplasm. The protein localises to the nucleus. The catalysed reaction is L-seryl-[protein] + ATP = O-phospho-L-seryl-[protein] + ADP + H(+). The enzyme catalyses L-threonyl-[protein] + ATP = O-phospho-L-threonyl-[protein] + ADP + H(+). Functionally, serine/threonine protein kinase that plays a role in the regulation of gene transcription. The kinase activity is induced by various effectors including AR or MAP2K6/MAPKK6. Phosphorylates the DNA-binding domain of androgen receptor/AR and thereby inhibits AR-mediated transcription. Also inhibits ESR1-mediated transcription. May play a role in cytoskeleton regulation by interacting with IQGAP1. May protect cells from apoptosis through phosphorylation of BAD. The sequence is that of Serine/threonine-protein kinase PAK 6 (Pak6) from Mus musculus (Mouse).